The sequence spans 221 residues: tRNA (guanine-N(7)-)-methyltransferase (221 aa).

4 residues coordinate S-adenosyl-L-methionine: glutamate 51, glutamate 76, aspartate 103, and aspartate 125. Aspartate 125 is a catalytic residue. Lysine 129 and aspartate 161 together coordinate substrate.

This sequence belongs to the class I-like SAM-binding methyltransferase superfamily. TrmB family.

It carries out the reaction guanosine(46) in tRNA + S-adenosyl-L-methionine = N(7)-methylguanosine(46) in tRNA + S-adenosyl-L-homocysteine. Its pathway is tRNA modification; N(7)-methylguanine-tRNA biosynthesis. In terms of biological role, catalyzes the formation of N(7)-methylguanine at position 46 (m7G46) in tRNA. The polypeptide is tRNA (guanine-N(7)-)-methyltransferase (Wolbachia pipientis wMel).